Reading from the N-terminus, the 343-residue chain is Phenylalanine--tRNA ligase alpha subunit (343 aa).

Position 256 (Glu-256) interacts with Mg(2+).

This sequence belongs to the class-II aminoacyl-tRNA synthetase family. Phe-tRNA synthetase alpha subunit type 1 subfamily. Tetramer of two alpha and two beta subunits. The cofactor is Mg(2+).

It is found in the cytoplasm. It carries out the reaction tRNA(Phe) + L-phenylalanine + ATP = L-phenylalanyl-tRNA(Phe) + AMP + diphosphate + H(+). The protein is Phenylalanine--tRNA ligase alpha subunit of Phytoplasma australiense.